The following is a 525-amino-acid chain: Protein nucleotidyltransferase YdiU (525 aa).

G107, G109, R110, K129, D141, G142, R192, and R199 together coordinate ATP. D268 serves as the catalytic Proton acceptor. N269 and D278 together coordinate Mg(2+). D278 is an ATP binding site.

The protein belongs to the SELO family. Mg(2+) serves as cofactor. It depends on Mn(2+) as a cofactor.

The catalysed reaction is L-seryl-[protein] + ATP = 3-O-(5'-adenylyl)-L-seryl-[protein] + diphosphate. It catalyses the reaction L-threonyl-[protein] + ATP = 3-O-(5'-adenylyl)-L-threonyl-[protein] + diphosphate. It carries out the reaction L-tyrosyl-[protein] + ATP = O-(5'-adenylyl)-L-tyrosyl-[protein] + diphosphate. The enzyme catalyses L-histidyl-[protein] + UTP = N(tele)-(5'-uridylyl)-L-histidyl-[protein] + diphosphate. The catalysed reaction is L-seryl-[protein] + UTP = O-(5'-uridylyl)-L-seryl-[protein] + diphosphate. It catalyses the reaction L-tyrosyl-[protein] + UTP = O-(5'-uridylyl)-L-tyrosyl-[protein] + diphosphate. Nucleotidyltransferase involved in the post-translational modification of proteins. It can catalyze the addition of adenosine monophosphate (AMP) or uridine monophosphate (UMP) to a protein, resulting in modifications known as AMPylation and UMPylation. In Ralstonia nicotianae (strain ATCC BAA-1114 / GMI1000) (Ralstonia solanacearum), this protein is Protein nucleotidyltransferase YdiU.